A 340-amino-acid polypeptide reads, in one-letter code: N-acetyl-gamma-glutamyl-phosphate reductase (340 aa).

The active site involves C146.

Belongs to the NAGSA dehydrogenase family. Type 1 subfamily.

It is found in the cytoplasm. It catalyses the reaction N-acetyl-L-glutamate 5-semialdehyde + phosphate + NADP(+) = N-acetyl-L-glutamyl 5-phosphate + NADPH + H(+). The protein operates within amino-acid biosynthesis; L-arginine biosynthesis; N(2)-acetyl-L-ornithine from L-glutamate: step 3/4. Its function is as follows. Catalyzes the NADPH-dependent reduction of N-acetyl-5-glutamyl phosphate to yield N-acetyl-L-glutamate 5-semialdehyde. The sequence is that of N-acetyl-gamma-glutamyl-phosphate reductase from Streptococcus gordonii (strain Challis / ATCC 35105 / BCRC 15272 / CH1 / DL1 / V288).